Here is a 147-residue protein sequence, read N- to C-terminus: UPF0178 protein VS_2364 (147 aa).

This sequence belongs to the UPF0178 family.

The sequence is that of UPF0178 protein VS_2364 from Vibrio atlanticus (strain LGP32) (Vibrio splendidus (strain Mel32)).